Consider the following 944-residue polypeptide: Translation initiation factor IF-2 (944 aa).

Positions 61 to 281 (IQANQPAKNP…TAKNNKSHKI (221 aa)) are disordered. The segment covering 132-150 (TFENQTPPTENTPKVVSHS) has biased composition (polar residues). Basic and acidic residues predominate over residues 151-169 (QIEKAKQKLQEIQKSREAL). Residues 175-185 (SNANNASNTNN) show a composition bias toward low complexity. Positions 186–203 (AKKEISEVKKQEQEIKRH) are enriched in basic and acidic residues. The span at 204–215 (ENIKRRTGFRVI) shows a compositional bias: basic residues. Basic and acidic residues predominate over residues 244–259 (EDIKKEWQEKDKQEAK). Residues 443–612 (ERPPVVTIMG…LIQADIMELK (170 aa)) form the tr-type G domain. The segment at 452–459 (GHVDHGKT) is G1. GTP is bound at residue 452-459 (GHVDHGKT). The segment at 477 to 481 (GITQH) is G2. Positions 498 to 501 (DTPG) are G3. GTP is bound by residues 498 to 502 (DTPGH) and 552 to 555 (NKMD). The tract at residues 552–555 (NKMD) is G4. The interval 588-590 (SAK) is G5.

This sequence belongs to the TRAFAC class translation factor GTPase superfamily. Classic translation factor GTPase family. IF-2 subfamily.

It is found in the cytoplasm. Functionally, one of the essential components for the initiation of protein synthesis. Protects formylmethionyl-tRNA from spontaneous hydrolysis and promotes its binding to the 30S ribosomal subunits. Also involved in the hydrolysis of GTP during the formation of the 70S ribosomal complex. The sequence is that of Translation initiation factor IF-2 from Helicobacter pylori (strain HPAG1).